Reading from the N-terminus, the 208-residue chain is Large ribosomal subunit protein bL25 (208 aa).

Residues 163–208 are disordered; sequence DYSYNHEPDEVVASILPPQKQEETEAESAAQDVEEPEKGTEEEKEE. Positions 198–208 are enriched in basic and acidic residues; sequence PEKGTEEEKEE.

Belongs to the bacterial ribosomal protein bL25 family. CTC subfamily. Part of the 50S ribosomal subunit; part of the 5S rRNA/L5/L18/L25 subcomplex. Contacts the 5S rRNA. Binds to the 5S rRNA independently of L5 and L18.

Its function is as follows. This is one of the proteins that binds to the 5S RNA in the ribosome where it forms part of the central protuberance. The chain is Large ribosomal subunit protein bL25 from Bacillus licheniformis (strain ATCC 14580 / DSM 13 / JCM 2505 / CCUG 7422 / NBRC 12200 / NCIMB 9375 / NCTC 10341 / NRRL NRS-1264 / Gibson 46).